Here is a 227-residue protein sequence, read N- to C-terminus: uncharacterized protein (227 aa).

The next 7 helical transmembrane spans lie at 15-34 (FIAA…FLIY), 55-77 (TFLF…ASGV), 92-114 (AFSM…YSLL), 121-140 (FPGE…TSLL), 145-167 (LVFL…VNYS), 180-202 (PLYI…FLPL), and 206-224 (FAIY…YRVL).

It localises to the cell membrane. This is an uncharacterized protein from Archaeoglobus fulgidus (strain ATCC 49558 / DSM 4304 / JCM 9628 / NBRC 100126 / VC-16).